The sequence spans 424 residues: Anaerobic glycerol-3-phosphate dehydrogenase subunit B (424 aa).

Belongs to the anaerobic G-3-P dehydrogenase subunit B family. Composed of a catalytic GlpA/B dimer and of membrane bound GlpC. FMN serves as cofactor.

The catalysed reaction is a quinone + sn-glycerol 3-phosphate = dihydroxyacetone phosphate + a quinol. It functions in the pathway polyol metabolism; glycerol degradation via glycerol kinase pathway; glycerone phosphate from sn-glycerol 3-phosphate (anaerobic route): step 1/1. Conversion of glycerol 3-phosphate to dihydroxyacetone. Uses fumarate or nitrate as electron acceptor. The protein is Anaerobic glycerol-3-phosphate dehydrogenase subunit B of Yersinia pseudotuberculosis serotype I (strain IP32953).